A 262-amino-acid chain; its full sequence is Nurim (262 aa).

The Nuclear portion of the chain corresponds to 1-4 (MAPA). The helical transmembrane segment at 5–28 (LLLVPAALASFILAFGTGVEFVRF) threads the bilayer. The Perinuclear space portion of the chain corresponds to 29–58 (TSLRPLLGGIPESGGPDARQGWLAALQDRS). A helical membrane pass occupies residues 59–80 (ILAPLAWDLGLLLLFVGQHSLM). The Nuclear portion of the chain corresponds to 81-97 (AAERVKAWTSRYFGVLQ). A helical membrane pass occupies residues 98–114 (RSLYVACTALALQLVMR). Residues 115–133 (YWEPIPKGPVLWEARAEPW) are Perinuclear space-facing. A helical transmembrane segment spans residues 134–164 (ATWVPLLCFVLHVISWLLIFSILLVFDYAEL). Residues 165-191 (MGLKQVYYHVLGLGEPLALKSPRALRL) lie on the Nuclear side of the membrane. Residues 192 to 210 (FSHLRHPVCVELLTVLWVV) form a helical membrane-spanning segment. Residues 211-216 (PTLGTD) lie on the Perinuclear space side of the membrane. The helical transmembrane segment at 217-234 (RLLLAFLLTLYLGLAHGL) threads the bilayer. Topologically, residues 235–262 (DQQDLRYLRAQLQRKLHLLSRPQDGEAE) are nuclear.

It belongs to the nurim family.

It localises to the nucleus inner membrane. This is Nurim (NRM) from Pan troglodytes (Chimpanzee).